The primary structure comprises 312 residues: Cell division control protein 2 homolog D (312 aa).

Positions 14–304 (FVKLEKVGEG…AKKAMEHPYF (291 aa)) constitute a Protein kinase domain. Residues 20–28 (VGEGTYGKV) and Lys43 contribute to the ATP site. Thr24 is subject to Phosphothreonine. Tyr25 is modified (phosphotyrosine). Asp145 (proton acceptor) is an active-site residue. The residue at position 179 (Thr179) is a Phosphothreonine; by CAK.

It belongs to the protein kinase superfamily. CMGC Ser/Thr protein kinase family. CDC2/CDKX subfamily.

The catalysed reaction is L-seryl-[protein] + ATP = O-phospho-L-seryl-[protein] + ADP + H(+). It catalyses the reaction L-threonyl-[protein] + ATP = O-phospho-L-threonyl-[protein] + ADP + H(+). It carries out the reaction [DNA-directed RNA polymerase] + ATP = phospho-[DNA-directed RNA polymerase] + ADP + H(+). Functionally, plays a key role in the control of the eukaryotic cell cycle. This Antirrhinum majus (Garden snapdragon) protein is Cell division control protein 2 homolog D (CDC2D).